Reading from the N-terminus, the 319-residue chain is Lipoyl synthase (319 aa).

The disordered stretch occupies residues 1 to 24 (MAVVIDTVGARPRHPEKQANPDTP). Residues 13 to 24 (RHPEKQANPDTP) are compositionally biased toward basic and acidic residues. Residues Cys58, Cys63, Cys69, Cys84, Cys88, Cys91, and Ser298 each contribute to the [4Fe-4S] cluster site. The region spanning 70 to 287 (WDKSHATFMI…EEIARAKGFL (218 aa)) is the Radical SAM core domain.

It belongs to the radical SAM superfamily. Lipoyl synthase family. The cofactor is [4Fe-4S] cluster.

The protein localises to the cytoplasm. It catalyses the reaction [[Fe-S] cluster scaffold protein carrying a second [4Fe-4S](2+) cluster] + N(6)-octanoyl-L-lysyl-[protein] + 2 oxidized [2Fe-2S]-[ferredoxin] + 2 S-adenosyl-L-methionine + 4 H(+) = [[Fe-S] cluster scaffold protein] + N(6)-[(R)-dihydrolipoyl]-L-lysyl-[protein] + 4 Fe(3+) + 2 hydrogen sulfide + 2 5'-deoxyadenosine + 2 L-methionine + 2 reduced [2Fe-2S]-[ferredoxin]. It functions in the pathway protein modification; protein lipoylation via endogenous pathway; protein N(6)-(lipoyl)lysine from octanoyl-[acyl-carrier-protein]: step 2/2. Functionally, catalyzes the radical-mediated insertion of two sulfur atoms into the C-6 and C-8 positions of the octanoyl moiety bound to the lipoyl domains of lipoate-dependent enzymes, thereby converting the octanoylated domains into lipoylated derivatives. This chain is Lipoyl synthase, found in Phenylobacterium zucineum (strain HLK1).